The sequence spans 144 residues: Putative pre-16S rRNA nuclease (144 aa).

Belongs to the YqgF nuclease family.

It is found in the cytoplasm. Its function is as follows. Could be a nuclease involved in processing of the 5'-end of pre-16S rRNA. The polypeptide is Putative pre-16S rRNA nuclease (Blochmanniella pennsylvanica (strain BPEN)).